We begin with the raw amino-acid sequence, 426 residues long: Glutamyl-tRNA reductase (426 aa).

Substrate is bound by residues 49-52 (TCNR), S109, 114-116 (EGQ), and Q120. C50 serves as the catalytic Nucleophile. 189–194 (GAGETG) contributes to the NADP(+) binding site.

This sequence belongs to the glutamyl-tRNA reductase family. In terms of assembly, homodimer.

It carries out the reaction (S)-4-amino-5-oxopentanoate + tRNA(Glu) + NADP(+) = L-glutamyl-tRNA(Glu) + NADPH + H(+). Its pathway is porphyrin-containing compound metabolism; protoporphyrin-IX biosynthesis; 5-aminolevulinate from L-glutamyl-tRNA(Glu): step 1/2. It participates in porphyrin-containing compound metabolism; chlorophyll biosynthesis. Catalyzes the NADPH-dependent reduction of glutamyl-tRNA(Glu) to glutamate 1-semialdehyde (GSA). This chain is Glutamyl-tRNA reductase, found in Chlorobium chlorochromatii (strain CaD3).